A 120-amino-acid chain; its full sequence is Urease subunit beta (120 aa).

The protein belongs to the urease beta subunit family. As to quaternary structure, heterotrimer of UreA (gamma), UreB (beta) and UreC (alpha) subunits. Three heterotrimers associate to form the active enzyme.

The protein localises to the cytoplasm. It carries out the reaction urea + 2 H2O + H(+) = hydrogencarbonate + 2 NH4(+). It participates in nitrogen metabolism; urea degradation; CO(2) and NH(3) from urea (urease route): step 1/1. This Corynebacterium efficiens (strain DSM 44549 / YS-314 / AJ 12310 / JCM 11189 / NBRC 100395) protein is Urease subunit beta.